Consider the following 446-residue polypeptide: Tubulin beta-6 chain (446 aa).

Residues Q11, E69, S138, G142, T143, G144, N204, and N226 each contribute to the GTP site. Position 69 (E69) interacts with Mg(2+). The interval 426–446 (QDATADEEEYEDEEEVQADDM) is disordered. The span at 429–446 (TADEEEYEDEEEVQADDM) shows a compositional bias: acidic residues.

The protein belongs to the tubulin family. Dimer of alpha and beta chains. A typical microtubule is a hollow water-filled tube with an outer diameter of 25 nm and an inner diameter of 15 nM. Alpha-beta heterodimers associate head-to-tail to form protofilaments running lengthwise along the microtubule wall with the beta-tubulin subunit facing the microtubule plus end conferring a structural polarity. Microtubules usually have 13 protofilaments but different protofilament numbers can be found in some organisms and specialized cells. Mg(2+) serves as cofactor.

It localises to the cytoplasm. The protein localises to the cytoskeleton. Its function is as follows. Tubulin is the major constituent of microtubules, a cylinder consisting of laterally associated linear protofilaments composed of alpha- and beta-tubulin heterodimers. Microtubules grow by the addition of GTP-tubulin dimers to the microtubule end, where a stabilizing cap forms. Below the cap, tubulin dimers are in GDP-bound state, owing to GTPase activity of alpha-tubulin. This chain is Tubulin beta-6 chain (TUBB6), found in Zea mays (Maize).